A 197-amino-acid chain; its full sequence is Xanthine phosphoribosyltransferase (197 aa).

Positions 20 and 27 each coordinate xanthine. 5-phospho-alpha-D-ribose 1-diphosphate is bound at residue alanine 128 to alanine 132. Lysine 156 serves as a coordination point for xanthine.

This sequence belongs to the purine/pyrimidine phosphoribosyltransferase family. Xpt subfamily. Homodimer.

It localises to the cytoplasm. It catalyses the reaction XMP + diphosphate = xanthine + 5-phospho-alpha-D-ribose 1-diphosphate. It functions in the pathway purine metabolism; XMP biosynthesis via salvage pathway; XMP from xanthine: step 1/1. Converts the preformed base xanthine, a product of nucleic acid breakdown, to xanthosine 5'-monophosphate (XMP), so it can be reused for RNA or DNA synthesis. The chain is Xanthine phosphoribosyltransferase from Bacillus thuringiensis (strain Al Hakam).